Reading from the N-terminus, the 187-residue chain is Ribosome-recycling factor (187 aa).

The protein belongs to the RRF family.

It localises to the cytoplasm. Its function is as follows. Responsible for the release of ribosomes from messenger RNA at the termination of protein biosynthesis. May increase the efficiency of translation by recycling ribosomes from one round of translation to another. The chain is Ribosome-recycling factor from Orientia tsutsugamushi (strain Boryong) (Rickettsia tsutsugamushi).